The following is a 226-amino-acid chain: Urease accessory protein UreF (226 aa).

Belongs to the UreF family. In terms of assembly, ureD, UreF and UreG form a complex that acts as a GTP-hydrolysis-dependent molecular chaperone, activating the urease apoprotein by helping to assemble the nickel containing metallocenter of UreC. The UreE protein probably delivers the nickel.

It localises to the cytoplasm. Functionally, required for maturation of urease via the functional incorporation of the urease nickel metallocenter. The protein is Urease accessory protein UreF of Paraburkholderia phymatum (strain DSM 17167 / CIP 108236 / LMG 21445 / STM815) (Burkholderia phymatum).